The primary structure comprises 167 residues: Aphrodisin (167 aa).

The N-terminal stretch at 1–16 (MVKILVLALVFSLAHA) is a signal peptide. A Pyrrolidone carboxylic acid modification is found at glutamine 17. Disulfide bonds link cysteine 54–cysteine 58 and cysteine 73–cysteine 165. N-linked (GlcNAc...) asparagine glycans are attached at residues asparagine 57 and asparagine 85.

This sequence belongs to the calycin superfamily. Lipocalin family. Expressed in the vagina, uterus, and Bartholin's glands of female hamsters. Secreted in vaginal discharge.

The protein localises to the secreted. Its function is as follows. Acts as an aphrodisiac pheromone, reliably eliciting copulatory behavior from male hamster. This is Aphrodisin from Mesocricetus auratus (Golden hamster).